The chain runs to 401 residues: Tyrosine--tRNA ligase (401 aa).

Positions 45-54 (PTAPDLHLGH) match the 'HIGH' region motif. The 'KMSKS' region signature appears at 230 to 234 (KMSKS). Lys233 contributes to the ATP binding site. The 61-residue stretch at 339–399 (IWLAKALVEC…GKRKFAKLKV (61 aa)) folds into the S4 RNA-binding domain.

It belongs to the class-I aminoacyl-tRNA synthetase family. TyrS type 2 subfamily. As to quaternary structure, homodimer.

The protein resides in the cytoplasm. It carries out the reaction tRNA(Tyr) + L-tyrosine + ATP = L-tyrosyl-tRNA(Tyr) + AMP + diphosphate + H(+). In terms of biological role, catalyzes the attachment of tyrosine to tRNA(Tyr) in a two-step reaction: tyrosine is first activated by ATP to form Tyr-AMP and then transferred to the acceptor end of tRNA(Tyr). This Campylobacter jejuni (strain RM1221) protein is Tyrosine--tRNA ligase.